A 1061-amino-acid polypeptide reads, in one-letter code: Eukaryotic translation initiation factor 3 subunit A (1061 aa).

Residues 114-126 (QSSIEATTGSSSV) show a composition bias toward polar residues. Positions 114–133 (QSSIEATTGSSSVEDLEASE) are disordered. The PCI domain occupies 339–523 (LQKAATFVVL…GVLSFDVDVF (185 aa)). Coiled coils occupy residues 609–724 (EVIQ…KRLD) and 789–906 (RADL…AAAA). Basic and acidic residues predominate over residues 828–901 (REKREREEKE…EAMARRRAEK (74 aa)). The interval 828–1061 (REKREREEKE…KYVPKFRREG (234 aa)) is disordered. 2 stretches are compositionally biased toward pro residues: residues 950 to 962 (SGPP…PPPI) and 1000 to 1011 (APPPERSGPPPR).

This sequence belongs to the eIF-3 subunit A family. Component of the eukaryotic translation initiation factor 3 (eIF-3) complex.

It is found in the cytoplasm. Functionally, RNA-binding component of the eukaryotic translation initiation factor 3 (eIF-3) complex, which is involved in protein synthesis of a specialized repertoire of mRNAs and, together with other initiation factors, stimulates binding of mRNA and methionyl-tRNAi to the 40S ribosome. The eIF-3 complex specifically targets and initiates translation of a subset of mRNAs involved in cell proliferation. The protein is Eukaryotic translation initiation factor 3 subunit A of Chaetomium globosum (strain ATCC 6205 / CBS 148.51 / DSM 1962 / NBRC 6347 / NRRL 1970) (Soil fungus).